A 563-amino-acid polypeptide reads, in one-letter code: Cytidine monophosphate-N-acetylneuraminic acid hydroxylase (563 aa).

The 99-residue stretch at 10–108 (LSPAETANLK…VEMDGNDGLF (99 aa)) folds into the Rieske domain. [2Fe-2S] cluster contacts are provided by Cys50, His52, Cys71, and His74.

This sequence belongs to the CMP-Neu5Ac hydroxylase family. The cofactor is [2Fe-2S] cluster.

The protein localises to the cytoplasm. It catalyses the reaction CMP-N-acetyl-beta-neuraminate + 2 Fe(II)-[cytochrome b5] + O2 + 2 H(+) = CMP-N-glycoloyl-beta-neuraminate + 2 Fe(III)-[cytochrome b5] + H2O. It functions in the pathway amino-sugar metabolism; N-acetylneuraminate metabolism. Its function is as follows. Sialic acids are components of carbohydrate chains of glycoconjugates and are involved in cell-cell recognition and cell-pathogen interactions. Catalyzes the conversion of CMP-N-acetylneuraminic acid (CMP-Neu5Ac) into its hydroxylated derivative CMP-N-glycolylneuraminic acid (CMP-Neu5Gc), a sialic acid abundantly expressed at the surface of many cells. The chain is Cytidine monophosphate-N-acetylneuraminic acid hydroxylase (CMAH) from Cricetulus griseus (Chinese hamster).